The chain runs to 541 residues: FAD-linked oxidoreductase pynB (541 aa).

A signal peptide spans Met1–Ala20. Asn30, Asn57, Asn117, Asn131, Asn158, Asn253, Asn306, Asn343, Asn430, and Asn461 each carry an N-linked (GlcNAc...) asparagine glycan. The FAD-binding PCMH-type domain occupies Phe71–Phe242.

Belongs to the oxygen-dependent FAD-linked oxidoreductase family. Requires FAD as cofactor.

It functions in the pathway secondary metabolite biosynthesis. FAD-linked oxidoreductase; part of the gene cluster that mediates the biosynthesis of pyranonigrins, a family of antioxidative compounds. The first step of pyranonigrins biosynthesis is performed by the hybrid PKS-NRPS synthetase that condenses 6 malonyl-CoA units to an acetyl starter unit, to form a 1,3,5-trioxotetradecane-6,8-dienyl-ACP. The enoyl reductase (ER) domain of pynA is likely to be functional during the first two rounds of polyketide chain extension, to generate the saturated C-C bonds of the alkyl side chain. PynA subsequently forms the amide bond between the acyl chain and L-serine. Although pynA has a terminal reductase domain, it appears to require the thioesterase pynI for the release of the straight-chain intermediate from pynA via the formation of a tetramic acid pyranonigrin J. The methyltransferase pynC then coverts pyranonigrin J to pyranonigrin I via N-methylation. The FAD-dependent monooxygenase pynG catalyzes an epoxidation-mediated cyclization to form the dihydro-gamma-pyrone moiety, followed by pynD-catalyzed oxidation of the alcohol to the ketone and enolization to yield the characteristic tetramic acid-fused gamma-pyrone core of pyranonigrin H. Pyranonigrin H is substrate of pynH for dehydration-mediated exo-methylene formation from the serine side chain to produce pyranonigrin E, before the oxidase pynE reduces the exo-methylene of pyranonigrin E into a pendant methyl to form pyranonigrin G. The FAD-linked oxidoreductase pynB performs the reverse reaction and converts pyranonigrin G back to pyranonigrin E. The chain is FAD-linked oxidoreductase pynB from Aspergillus niger (strain ATCC MYA-4892 / CBS 513.88 / FGSC A1513).